A 661-amino-acid chain; its full sequence is Pseudouridylate synthase 7 homolog (661 aa).

The residue at position 1 (Met-1) is an N-acetylmethionine. The tract at residues 1–97 is disordered; that stretch reads MEMTEMTGVS…GLSEECEEEE (97 aa). At Ser-10 the chain carries Phosphoserine. Residues 36–52 show a composition bias toward polar residues; the sequence is SECSLTKGQDGLQNDFL. Residues 77-97 show a composition bias toward acidic residues; that stretch reads QLEDEEEEEEDGLSEECEEEE. Ser-127 carries the post-translational modification Phosphoserine. Catalysis depends on Asp-294, which acts as the Nucleophile. One can recognise a TRUD domain in the interval 370 to 580; it reads GFINYYGMQR…SGAYRKIIIR (211 aa). Position 610 is a phosphothreonine (Thr-610).

It belongs to the pseudouridine synthase TruD family. In terms of assembly, interacts with SIRT1.

It localises to the nucleus. The catalysed reaction is a uridine in tRNA = a pseudouridine in tRNA. It catalyses the reaction uridine(13) in tRNA = pseudouridine(13) in tRNA. The enzyme catalyses a uridine in mRNA = a pseudouridine in mRNA. Its function is as follows. Pseudouridylate synthase that catalyzes pseudouridylation of RNAs. Acts as a regulator of protein synthesis in embryonic stem cells by mediating pseudouridylation of RNA fragments derived from tRNAs (tRFs): pseudouridylated tRFs inhibit translation by targeting the translation initiation complex. Also catalyzes pseudouridylation of mRNAs: mediates pseudouridylation of mRNAs with the consensus sequence 5'-UGUAG-3'. Acts as a regulator of pre-mRNA splicing by mediating pseudouridylation of pre-mRNAs at locations associated with alternatively spliced regions. Pseudouridylation of pre-mRNAs near splice sites directly regulates mRNA splicing and mRNA 3'-end processing. In addition to mRNAs and tRNAs, binds other types of RNAs, such as snRNAs, Y RNAs and vault RNAs, suggesting that it can catalyze pseudouridylation of many RNA types. The protein is Pseudouridylate synthase 7 homolog of Homo sapiens (Human).